A 353-amino-acid chain; its full sequence is Photosystem II protein D1 (353 aa).

T2 bears the N-acetylthreonine mark. At T2 the chain carries Phosphothreonine. 3 helical membrane-spanning segments follow: residues 29-46, 118-133, and 142-156; these read YIGWFGVLMIPTLLTATS, HFLLGVACYMGREWEL, and WIAVAYSAPVAAATA. H118 provides a ligand contact to chlorophyll a. Y126 contributes to the pheophytin a binding site. 2 residues coordinate [CaMn4O5] cluster: D170 and E189. Residues 197–218 traverse the membrane as a helical segment; the sequence is FHMLGVAGVFGGSLFSAMHGSL. Residue H198 coordinates chlorophyll a. A quinone is bound by residues H215 and 264–265; that span reads SF. H215 contributes to the Fe cation binding site. Fe cation is bound at residue H272. The helical transmembrane segment at 274–288 threads the bilayer; it reads FLAAWPVVGIWFTAL. H332, E333, D342, and A344 together coordinate [CaMn4O5] cluster. A propeptide spanning residues 345–353 is cleaved from the precursor; that stretch reads AVEAPSING.

The protein belongs to the reaction center PufL/M/PsbA/D family. PSII is composed of 1 copy each of membrane proteins PsbA, PsbB, PsbC, PsbD, PsbE, PsbF, PsbH, PsbI, PsbJ, PsbK, PsbL, PsbM, PsbT, PsbX, PsbY, PsbZ, Psb30/Ycf12, at least 3 peripheral proteins of the oxygen-evolving complex and a large number of cofactors. It forms dimeric complexes. The D1/D2 heterodimer binds P680, chlorophylls that are the primary electron donor of PSII, and subsequent electron acceptors. It shares a non-heme iron and each subunit binds pheophytin, quinone, additional chlorophylls, carotenoids and lipids. D1 provides most of the ligands for the Mn4-Ca-O5 cluster of the oxygen-evolving complex (OEC). There is also a Cl(-1) ion associated with D1 and D2, which is required for oxygen evolution. The PSII complex binds additional chlorophylls, carotenoids and specific lipids. is required as a cofactor. Tyr-161 forms a radical intermediate that is referred to as redox-active TyrZ, YZ or Y-Z. Post-translationally, C-terminally processed by CTPA; processing is essential to allow assembly of the oxygen-evolving complex and thus photosynthetic growth.

The protein localises to the plastid. It localises to the chloroplast thylakoid membrane. The catalysed reaction is 2 a plastoquinone + 4 hnu + 2 H2O = 2 a plastoquinol + O2. Photosystem II (PSII) is a light-driven water:plastoquinone oxidoreductase that uses light energy to abstract electrons from H(2)O, generating O(2) and a proton gradient subsequently used for ATP formation. It consists of a core antenna complex that captures photons, and an electron transfer chain that converts photonic excitation into a charge separation. The D1/D2 (PsbA/PsbD) reaction center heterodimer binds P680, the primary electron donor of PSII as well as several subsequent electron acceptors. This is Photosystem II protein D1 from Chloranthus spicatus (Chulantree).